The following is a 275-amino-acid chain: C-type lectin domain family 12 member B (275 aa).

Residues 1–41 are Cytoplasmic-facing; sequence MSDEVTYATLMLQDSARVRGNQDGNNLRKEGHPAQSSLWRG. Positions 5 to 10 match the ITIM motif motif; the sequence is VTYATL. Phosphotyrosine is present on Tyr7. Residues 42 to 64 form a helical; Signal-anchor for type II membrane protein membrane-spanning segment; that stretch reads AALSLMTLCLVLVTGLVTLATMF. Residues 65 to 275 are Extracellular-facing; it reads LQVSNDINSD…ASLVKTEDLD (211 aa). N-linked (GlcNAc...) asparagine glycans are attached at residues Asn91, Asn175, and Asn236. In terms of domain architecture, C-type lectin spans 149 to 263; that stretch reads YGNSCYYFSI…CSAEIPWICE (115 aa). 2 disulfides stabilise this stretch: Cys171-Cys262 and Cys241-Cys254.

In terms of assembly, homodimer. Interacts (via ITIM motif) with PTPN6. Interacts (via ITIM motif) with PTPN11; this interaction triggers dephosphorylation and activation of PTPN11.

The protein resides in the cell membrane. In terms of biological role, inhibitory receptor postulated to negatively regulate immune and non-immune functions. Upon phosphorylation, recruits SH2 domain-containing PTPN6 and PTPN11 phosphatases to its ITIM motif and antagonizes activation signals. Although it inhibits KLRK1/NKG2D-mediated signaling, it does not bind known ligands of KLRK1/NKG2D and therefore is not its inhibitory counterpart. May limit activation of myeloid cell subsets in response to infection or tissue inflammation. May protect target cells against natural killer cell-mediated lysis. May negatively regulate cell cycle and differentiation of melanocytes via inactivation of STAT3. The protein is C-type lectin domain family 12 member B (Clec12b) of Mus musculus (Mouse).